A 218-amino-acid polypeptide reads, in one-letter code: Probable transaldolase (218 aa).

Lys87 functions as the Schiff-base intermediate with substrate in the catalytic mechanism.

It belongs to the transaldolase family. Type 3B subfamily.

Its subcellular location is the cytoplasm. The enzyme catalyses D-sedoheptulose 7-phosphate + D-glyceraldehyde 3-phosphate = D-erythrose 4-phosphate + beta-D-fructose 6-phosphate. Its pathway is carbohydrate degradation; pentose phosphate pathway; D-glyceraldehyde 3-phosphate and beta-D-fructose 6-phosphate from D-ribose 5-phosphate and D-xylulose 5-phosphate (non-oxidative stage): step 2/3. Functionally, transaldolase is important for the balance of metabolites in the pentose-phosphate pathway. The polypeptide is Probable transaldolase (Parabacteroides distasonis (strain ATCC 8503 / DSM 20701 / CIP 104284 / JCM 5825 / NCTC 11152)).